Reading from the N-terminus, the 253-residue chain is Pimeloyl-[acyl-carrier protein] methyl ester esterase (253 aa).

Substrate contacts are provided by residues Trp-18, 78–79, and 139–143; these read SL and FLALD. Catalysis depends on Ser-78, which acts as the Nucleophile. Residues Asp-203 and His-231 contribute to the active site. His-231 lines the substrate pocket.

The protein belongs to the AB hydrolase superfamily. Carboxylesterase BioH family. Monomer.

Its subcellular location is the cytoplasm. The catalysed reaction is 6-carboxyhexanoyl-[ACP] methyl ester + H2O = 6-carboxyhexanoyl-[ACP] + methanol + H(+). Its pathway is cofactor biosynthesis; biotin biosynthesis. The physiological role of BioH is to remove the methyl group introduced by BioC when the pimeloyl moiety is complete. It allows to synthesize pimeloyl-ACP via the fatty acid synthetic pathway through the hydrolysis of the ester bonds of pimeloyl-ACP esters. The polypeptide is Pimeloyl-[acyl-carrier protein] methyl ester esterase (Xanthomonas campestris pv. campestris (strain 8004)).